The primary structure comprises 369 residues: MHGESPIKRRVSRKIWVGSVPVGGDAPIAVQSMTNSDTNDVAATVAQINRLEAAGVDIVRVSVPDMDAAEAFGRIKQLVKVPLVADIHFDYKIALRVAELGVDCLRINPGNIGREDRVRAVVDAARDRGIPIRIGVNAGSLEKDLQKKYGEPTPAALVESALRHVEHLERLNFQDFKVSVKASDVFMAVEAYRLLAKEIVQPLHLGITEAGGLRSGTVKSAVGLGMLLAEGIGDTIRISLAADPVEEVKVGYDILKSLHLRSRGINFIACPSCSRQNFDVVKTMNELEVRLEDLLVPLDVAVIGCVVNGPGEAKEAHVGLTGGTPNLIYIDGKPSQKLTNDNLVDELERLIREKAAQKVAADAALIARG.

[4Fe-4S] cluster-binding residues include Cys270, Cys273, Cys305, and Glu312.

It belongs to the IspG family. Requires [4Fe-4S] cluster as cofactor.

It catalyses the reaction (2E)-4-hydroxy-3-methylbut-2-enyl diphosphate + oxidized [flavodoxin] + H2O + 2 H(+) = 2-C-methyl-D-erythritol 2,4-cyclic diphosphate + reduced [flavodoxin]. Its pathway is isoprenoid biosynthesis; isopentenyl diphosphate biosynthesis via DXP pathway; isopentenyl diphosphate from 1-deoxy-D-xylulose 5-phosphate: step 5/6. In terms of biological role, converts 2C-methyl-D-erythritol 2,4-cyclodiphosphate (ME-2,4cPP) into 1-hydroxy-2-methyl-2-(E)-butenyl 4-diphosphate. The sequence is that of 4-hydroxy-3-methylbut-2-en-1-yl diphosphate synthase (flavodoxin) from Pseudomonas fluorescens (strain SBW25).